The chain runs to 446 residues: Glucarate dehydratase (446 aa).

Substrate-binding residues include histidine 32, threonine 103, tyrosine 150, and lysine 205. Residue lysine 207 is the Proton acceptor of the active site. Mg(2+) is bound by residues aspartate 235, glutamate 266, and asparagine 289. 235-237 provides a ligand contact to substrate; the sequence is DPN. Substrate contacts are provided by residues asparagine 289, 339-341, histidine 368, and arginine 422; that span reads HSN. The active-site Proton acceptor is the histidine 339.

This sequence belongs to the mandelate racemase/muconate lactonizing enzyme family. GlucD subfamily. In terms of assembly, homodimer. Mg(2+) serves as cofactor.

It catalyses the reaction D-glucarate = 5-dehydro-4-deoxy-D-glucarate + H2O. The protein operates within carbohydrate acid metabolism; D-glucarate degradation; 2,5-dioxopentanoate from D-glucarate: step 1/2. Catalyzes the dehydration of glucarate to 5-keto-4-deoxy-D-glucarate (5-kdGluc). Also acts on L-idarate. This chain is Glucarate dehydratase (gudD), found in Escherichia coli O157:H7.